The sequence spans 457 residues: MIVPDTEGLLIYSYGLMYGSYCMACQMLIPHFQCIPGIFPNFRISTELIKTMTDKLEQPNNNVPQQPWGPFPPAFGGRPSGEQTDGNPGEFDNDAAHQQTAPFMTHFFPRIGLQFPDFTEYQRFNGFQRNAFFPNPFGSQFTGQAFAQSFPLHNSMTTMDGFNLTHAPHPFSTNTNSTKPKDIENTVQSTIKHSSENIQDKPPVLSVEYPVKYDSELKFDANVDFTAVPKQESSDDSTLKNLKKSDQQLQQPQQFTFPPPLLAEKSFEQPRMREDVLPFHPQFYPAPLDMGTNFKQEMRTPPIDGHIDYRKFDASGKRMEFQPPGALHDCQVCLSTHANGLHFGARTCAACAAFFRRTISDDKRYVCKRNQRCNNASRDGTGYRKICRSCRMKRCLEIGMLPENVQHKRNRRDSGSPPRKTPFDTFFNGFYPSFQPSGSAAQPITVSSSESPRHTTN.

2 disordered regions span residues 57–95 and 230–252; these read EQPN…DNDA and KQES…LQQP. The nuclear receptor DNA-binding region spans 327 to 407; sequence LHDCQVCLST…IGMLPENVQH (81 aa). 2 consecutive NR C4-type zinc fingers follow at residues 330–351 and 367–395; these read CQVC…CAAC and CKRN…MKRC. The tract at residues 435 to 457 is disordered; sequence QPSGSAAQPITVSSSESPRHTTN.

The protein belongs to the nuclear hormone receptor family. NR0 subfamily. As to quaternary structure, heterodimer with a partner that confers DNA binding capacity or a nuclear hormone receptor whose DNA binding it inhibits. Expressed predominantly in the AWA neurons.

Its subcellular location is the nucleus. It is found in the cytoplasm. It localises to the perinuclear region. Required for the function of one pair of chemosensory neurons called AWA neurons that are involved in chemotaxis to volatile odorants. Acts in a pathway that specifies olfactory neuronal fate. Regulates the transcription of olfactory signaling molecules such as odr-10 that specify AWA neuron identity and function. Represses the expression in AWA neurons of factors such as str-2 which specify AWC neuron identity. In Caenorhabditis elegans, this protein is Nuclear hormone receptor family member odr-7 (odr-7).